A 546-amino-acid polypeptide reads, in one-letter code: Carotenoid 9,10(9',10')-cleavage dioxygenase (546 aa).

Residues His226, His274, His340, and His530 each coordinate Fe cation.

The protein belongs to the carotenoid oxygenase family. Requires Fe(2+) as cofactor. In vegetative and floral tissues.

The protein localises to the cytoplasm. The enzyme catalyses all-trans-zeaxanthin + 2 O2 = 4,9-dimethyldodeca-2,4,6,8,10-pentaenedial + 2 (3R)-hydroxy-beta-ionone. Cleaves a variety of carotenoids symmetrically at both the 9-10 and 9'-10' double bonds. Catalyzes the formation of 4,9-dimethyldodeca-2,4,6,8,10-pentaene-1,12-dialdehyde and probably hydroxydihydro-beta-ionone from zeaxanthin. This chain is Carotenoid 9,10(9',10')-cleavage dioxygenase (CCD), found in Crocus sativus (Saffron).